A 335-amino-acid chain; its full sequence is Galactosylgalactosylxylosylprotein 3-beta-glucuronosyltransferase 3 (335 aa).

Residues 1-7 (MKLKLKN) lie on the Cytoplasmic side of the membrane. A helical; Signal-anchor for type II membrane protein transmembrane segment spans residues 8–28 (VFLAYFLVSIAGLLYALVQLG). The Lumenal segment spans residues 29–335 (QPCDCLPPLR…GRGSDPAIEV (307 aa)). UDP-alpha-D-glucuronate contacts are provided by residues 82–84 (PTY), Asp-113, Arg-156, Arg-161, and 194–196 (DDD). Asp-196 contributes to the Mn(2+) binding site. Residues 243–252 (WEPSRPFPVD) form an interaction with galactose moiety of substrate glycoprotein region. The active-site Proton donor/acceptor is Glu-281. N-linked (GlcNAc...) asparagine glycosylation occurs at Asn-300. 308–310 (HTR) is a UDP-alpha-D-glucuronate binding site. Over residues 312-322 (EKPKMKQEEQL) the composition is skewed to basic and acidic residues. Residues 312 to 335 (EKPKMKQEEQLQRQGRGSDPAIEV) form a disordered region.

It belongs to the glycosyltransferase 43 family. As to quaternary structure, homodimer; disulfide-linked. Interacts with PXYLP1; the interaction increases the 2-phosphoxylose phosphatase activity of PXYLP1 during completion of linkage region formation in a B3GAT3-mediated manner. Requires Mn(2+) as cofactor. N-glycosylated. In terms of tissue distribution, ubiquitous (but weakly expressed in all tissues examined).

The protein localises to the golgi apparatus membrane. The protein resides in the golgi apparatus. It is found in the cis-Golgi network. It carries out the reaction 3-O-(beta-D-galactosyl-(1-&gt;3)-beta-D-galactosyl-(1-&gt;4)-beta-D-xylosyl)-L-seryl-[protein] + UDP-alpha-D-glucuronate = 3-O-(beta-D-GlcA-(1-&gt;3)-beta-D-Gal-(1-&gt;3)-beta-D-Gal-(1-&gt;4)-beta-D-Xyl)-L-seryl-[protein] + UDP + H(+). The protein operates within protein modification; protein glycosylation. Its activity is regulated as follows. Inhibited by EDTA. Functionally, glycosaminoglycans biosynthesis. Involved in forming the linkage tetrasaccharide present in heparan sulfate and chondroitin sulfate. Transfers a glucuronic acid moiety from the uridine diphosphate-glucuronic acid (UDP-GlcUA) to the common linkage region trisaccharide Gal-beta-1,3-Gal-beta-1,4-Xyl covalently bound to a Ser residue at the glycosaminylglycan attachment site of proteoglycans. Can also play a role in the biosynthesis of l2/HNK-1 carbohydrate epitope on glycoproteins. Shows strict specificity for Gal-beta-1,3-Gal-beta-1,4-Xyl, exhibiting negligible incorporation into other galactoside substrates including Galbeta1-3Gal beta1-O-benzyl, Galbeta1-4GlcNAc and Galbeta1-4Glc. Stimulates 2-phosphoxylose phosphatase activity of PXYLP1 in presence of uridine diphosphate-glucuronic acid (UDP-GlcUA) during completion of linkage region formation. The protein is Galactosylgalactosylxylosylprotein 3-beta-glucuronosyltransferase 3 (B3GAT3) of Homo sapiens (Human).